Here is a 340-residue protein sequence, read N- to C-terminus: Branched-chain-amino-acid aminotransferase (340 aa).

Lysine 187 is modified (N6-(pyridoxal phosphate)lysine).

The protein belongs to the class-IV pyridoxal-phosphate-dependent aminotransferase family. Pyridoxal 5'-phosphate is required as a cofactor.

The catalysed reaction is L-leucine + 2-oxoglutarate = 4-methyl-2-oxopentanoate + L-glutamate. The enzyme catalyses L-isoleucine + 2-oxoglutarate = (S)-3-methyl-2-oxopentanoate + L-glutamate. It catalyses the reaction L-valine + 2-oxoglutarate = 3-methyl-2-oxobutanoate + L-glutamate. The protein operates within amino-acid biosynthesis; L-isoleucine biosynthesis; L-isoleucine from 2-oxobutanoate: step 4/4. It participates in amino-acid biosynthesis; L-leucine biosynthesis; L-leucine from 3-methyl-2-oxobutanoate: step 4/4. Its pathway is amino-acid biosynthesis; L-valine biosynthesis; L-valine from pyruvate: step 4/4. Its function is as follows. Acts on leucine, isoleucine and valine. In Helicobacter pylori (strain J99 / ATCC 700824) (Campylobacter pylori J99), this protein is Branched-chain-amino-acid aminotransferase (ilvE).